Here is a 166-residue protein sequence, read N- to C-terminus: UPF0336 protein Mb0656 (166 aa).

This sequence belongs to the UPF0336 family.

In Mycobacterium bovis (strain ATCC BAA-935 / AF2122/97), this protein is UPF0336 protein Mb0656.